Here is a 186-residue protein sequence, read N- to C-terminus: Elongation factor P (186 aa).

This sequence belongs to the elongation factor P family.

It is found in the cytoplasm. Its pathway is protein biosynthesis; polypeptide chain elongation. In terms of biological role, involved in peptide bond synthesis. Stimulates efficient translation and peptide-bond synthesis on native or reconstituted 70S ribosomes in vitro. Probably functions indirectly by altering the affinity of the ribosome for aminoacyl-tRNA, thus increasing their reactivity as acceptors for peptidyl transferase. The sequence is that of Elongation factor P from Shewanella woodyi (strain ATCC 51908 / MS32).